The following is a 270-amino-acid chain: Orotidine 5'-phosphate decarboxylase (270 aa).

Lysine 95 serves as the catalytic Proton donor.

This sequence belongs to the OMP decarboxylase family. Type 2 subfamily.

It catalyses the reaction orotidine 5'-phosphate + H(+) = UMP + CO2. It participates in pyrimidine metabolism; UMP biosynthesis via de novo pathway; UMP from orotate: step 2/2. The polypeptide is Orotidine 5'-phosphate decarboxylase (Dechloromonas aromatica (strain RCB)).